Consider the following 439-residue polypeptide: Protein translocase subunit SecY (439 aa).

Transmembrane regions (helical) follow at residues 19 to 39 (ILFT…TAPG), 68 to 88 (YSLF…VQLL), 116 to 136 (YITL…FQAM), 151 to 171 (LMIG…GEQI), 176 to 196 (FGSG…PSAI), 216 to 236 (WIFV…TTFV), 269 to 289 (VIPV…LQFL), 312 to 332 (WTGM…YSFV), 373 to 393 (VGSL…NVWG), and 396 to 416 (KIVA…IQAV).

Belongs to the SecY/SEC61-alpha family. As to quaternary structure, component of the Sec protein translocase complex. Heterotrimer consisting of SecY, SecE and SecG subunits. The heterotrimers can form oligomers, although 1 heterotrimer is thought to be able to translocate proteins. Interacts with the ribosome. Interacts with SecDF, and other proteins may be involved. Interacts with SecA.

Its subcellular location is the cell membrane. Functionally, the central subunit of the protein translocation channel SecYEG. Consists of two halves formed by TMs 1-5 and 6-10. These two domains form a lateral gate at the front which open onto the bilayer between TMs 2 and 7, and are clamped together by SecE at the back. The channel is closed by both a pore ring composed of hydrophobic SecY resides and a short helix (helix 2A) on the extracellular side of the membrane which forms a plug. The plug probably moves laterally to allow the channel to open. The ring and the pore may move independently. The polypeptide is Protein translocase subunit SecY (Lactococcus lactis subsp. cremoris (Streptococcus cremoris)).